Here is a 308-residue protein sequence, read N- to C-terminus: Aspartate carbamoyltransferase catalytic subunit (308 aa).

Carbamoyl phosphate contacts are provided by Arg-55 and Thr-56. L-aspartate is bound at residue Lys-83. Carbamoyl phosphate contacts are provided by Arg-105, His-133, and Gln-136. L-aspartate-binding residues include Arg-166 and Arg-223. Positions 264 and 265 each coordinate carbamoyl phosphate.

It belongs to the aspartate/ornithine carbamoyltransferase superfamily. ATCase family. As to quaternary structure, heterododecamer (2C3:3R2) of six catalytic PyrB chains organized as two trimers (C3), and six regulatory PyrI chains organized as three dimers (R2).

The enzyme catalyses carbamoyl phosphate + L-aspartate = N-carbamoyl-L-aspartate + phosphate + H(+). Its pathway is pyrimidine metabolism; UMP biosynthesis via de novo pathway; (S)-dihydroorotate from bicarbonate: step 2/3. In terms of biological role, catalyzes the condensation of carbamoyl phosphate and aspartate to form carbamoyl aspartate and inorganic phosphate, the committed step in the de novo pyrimidine nucleotide biosynthesis pathway. The sequence is that of Aspartate carbamoyltransferase catalytic subunit from Salinispora arenicola (strain CNS-205).